A 335-amino-acid polypeptide reads, in one-letter code: Avermitilol synthase (335 aa).

5 residues coordinate Mg(2+): D80, D84, N219, S223, and E227. The DDXXD motif signature appears at 80–84; that stretch reads DDQFD.

Belongs to the terpene synthase family. Mg(2+) is required as a cofactor.

It catalyses the reaction (2E,6E)-farnesyl diphosphate + H2O = avermitilol + diphosphate. Functionally, catalyzes the cyclization of farnesyl diphosphate to avermitilol. The polypeptide is Avermitilol synthase (tpc1) (Streptomyces avermitilis (strain ATCC 31267 / DSM 46492 / JCM 5070 / NBRC 14893 / NCIMB 12804 / NRRL 8165 / MA-4680)).